A 210-amino-acid chain; its full sequence is MEEPRHSKRPRFLAPNQASGGPPTEPGCSGVDREDPVDPVQPAKPTAYVKPMRREPPARAQPAPPAGRGQRGGGSWRAGRGRGSGAGLLRALGERVGPGMYLVHLNDHGELGYQGQLEARQTPAFSFTEAALMPGIVQEGPGPHAAQPEVGLQEPPPAPGPVAVARQTMLAPSPSLSFRPPGGSSTLCIVQTSNSTIVQSVPVFPAHSAH.

The segment covering 1-11 has biased composition (basic residues); sequence MEEPRHSKRPR. The disordered stretch occupies residues 1-82; the sequence is MEEPRHSKRP…GGSWRAGRGR (82 aa). Over residues 69 to 82 the composition is skewed to gly residues; the sequence is GQRGGGSWRAGRGR.

The protein belongs to the PRR20 family.

This chain is Proline-rich protein 20G, found in Homo sapiens (Human).